The primary structure comprises 81 residues: Cortexin-2 (81 aa).

Residues 29 to 49 traverse the membrane as a helical segment; the sequence is TAFAFVGMLLVFLGLLIVRCF.

The protein belongs to the cortexin family.

It is found in the membrane. This Danio rerio (Zebrafish) protein is Cortexin-2 (ctxn2).